We begin with the raw amino-acid sequence, 193 residues long: dTTP/UTP pyrophosphatase (193 aa).

Residue Asp-77 is the Proton acceptor of the active site.

Belongs to the Maf family. YhdE subfamily. The cofactor is a divalent metal cation.

It is found in the cytoplasm. The enzyme catalyses dTTP + H2O = dTMP + diphosphate + H(+). It carries out the reaction UTP + H2O = UMP + diphosphate + H(+). Its function is as follows. Nucleoside triphosphate pyrophosphatase that hydrolyzes dTTP and UTP. May have a dual role in cell division arrest and in preventing the incorporation of modified nucleotides into cellular nucleic acids. The protein is dTTP/UTP pyrophosphatase of Bacteroides fragilis (strain ATCC 25285 / DSM 2151 / CCUG 4856 / JCM 11019 / LMG 10263 / NCTC 9343 / Onslow / VPI 2553 / EN-2).